The chain runs to 386 residues: Probable serine/threonine-protein kinase PBL23 (386 aa).

A lipid anchor (S-palmitoyl cysteine) is attached at C5. The Protein kinase domain occupies 82–360; the sequence is FNPDNQLGEG…SDVVTALEYL (279 aa). Residues 88–96 and K111 each bind ATP; that span reads LGEGGFGRV. D210 functions as the Proton acceptor in the catalytic mechanism. A disordered region spans residues 365–386; sequence TEEDGQTVEGEEEEEEDERSKL. Residues 368 to 386 are compositionally biased toward acidic residues; the sequence is DGQTVEGEEEEEEDERSKL.

It belongs to the protein kinase superfamily. Ser/Thr protein kinase family.

It localises to the cell membrane. It carries out the reaction L-seryl-[protein] + ATP = O-phospho-L-seryl-[protein] + ADP + H(+). The catalysed reaction is L-threonyl-[protein] + ATP = O-phospho-L-threonyl-[protein] + ADP + H(+). May be involved in plant defense signaling. This Arabidopsis thaliana (Mouse-ear cress) protein is Probable serine/threonine-protein kinase PBL23.